Consider the following 126-residue polypeptide: Large ribosomal subunit protein eL18 (126 aa).

Belongs to the eukaryotic ribosomal protein eL18 family.

The protein is Large ribosomal subunit protein eL18 of Methanosarcina mazei (strain ATCC BAA-159 / DSM 3647 / Goe1 / Go1 / JCM 11833 / OCM 88) (Methanosarcina frisia).